A 294-amino-acid chain; its full sequence is RNA exonuclease 4 (294 aa).

Residues 1–13 show a composition bias toward polar residues; it reads MVLSSNWLSLQKS. Residues 1 to 56 form a disordered region; the sequence is MVLSSNWLSLQKSTDSDSVNKNKGGKKTKSNSKKRTVSVKKDKQYVDKKKKNGTGS. Positions 23–38 are enriched in basic residues; it reads KGGKKTKSNSKKRTVS. In terms of domain architecture, Exonuclease spans 119 to 271; that stretch reads YVSMDCEFVG…EDARATMLLY (153 aa).

Belongs to the REXO4 family.

It localises to the nucleus. In terms of biological role, exoribonuclease involved in ribosome biosynthesis. Involved in the processing of ITS1, the internal transcribed spacer localized between the 18S and 5.8S rRNAs. This Kluyveromyces lactis (strain ATCC 8585 / CBS 2359 / DSM 70799 / NBRC 1267 / NRRL Y-1140 / WM37) (Yeast) protein is RNA exonuclease 4 (REX4).